The primary structure comprises 38 residues: Large ribosomal subunit protein bL36 (38 aa).

This sequence belongs to the bacterial ribosomal protein bL36 family.

In Prosthecochloris aestuarii (strain DSM 271 / SK 413), this protein is Large ribosomal subunit protein bL36.